Reading from the N-terminus, the 391-residue chain is Bifunctional enzyme IspD/IspF (391 aa).

Residues 1–230 (MLAAGRGKRA…KKKMQMFPDI (230 aa)) are 2-C-methyl-D-erythritol 4-phosphate cytidylyltransferase. A 2-C-methyl-D-erythritol 2,4-cyclodiphosphate synthase region spans residues 231 to 391 (RTGNGYDVHS…TVLYPGEIPK (161 aa)). A divalent metal cation-binding residues include Asp237 and His239. 4-CDP-2-C-methyl-D-erythritol 2-phosphate-binding positions include 237-239 (DVH) and 263-264 (HS). His271 is an a divalent metal cation binding site. 4-CDP-2-C-methyl-D-erythritol 2-phosphate is bound by residues 285–287 (DIG), 361–364 (TTNE), Phe368, and Arg371.

It in the N-terminal section; belongs to the IspD/TarI cytidylyltransferase family. IspD subfamily. This sequence in the C-terminal section; belongs to the IspF family. It depends on a divalent metal cation as a cofactor.

The enzyme catalyses 2-C-methyl-D-erythritol 4-phosphate + CTP + H(+) = 4-CDP-2-C-methyl-D-erythritol + diphosphate. It carries out the reaction 4-CDP-2-C-methyl-D-erythritol 2-phosphate = 2-C-methyl-D-erythritol 2,4-cyclic diphosphate + CMP. It functions in the pathway isoprenoid biosynthesis; isopentenyl diphosphate biosynthesis via DXP pathway; isopentenyl diphosphate from 1-deoxy-D-xylulose 5-phosphate: step 2/6. It participates in isoprenoid biosynthesis; isopentenyl diphosphate biosynthesis via DXP pathway; isopentenyl diphosphate from 1-deoxy-D-xylulose 5-phosphate: step 4/6. Functionally, bifunctional enzyme that catalyzes the formation of 4-diphosphocytidyl-2-C-methyl-D-erythritol from CTP and 2-C-methyl-D-erythritol 4-phosphate (MEP) (IspD), and catalyzes the conversion of 4-diphosphocytidyl-2-C-methyl-D-erythritol 2-phosphate (CDP-ME2P) to 2-C-methyl-D-erythritol 2,4-cyclodiphosphate (ME-CPP) with a corresponding release of cytidine 5-monophosphate (CMP) (IspF). The protein is Bifunctional enzyme IspD/IspF of Bartonella quintana (strain Toulouse) (Rochalimaea quintana).